The following is a 491-amino-acid chain: Transcription factor AP-2-alpha (491 aa).

A disordered region spans residues Gly-74 to Leu-161. The short motif at Tyr-111–Tyr-116 is the PPxY motif element. 2 stretches are compositionally biased toward low complexity: residues Ile-119–Ser-128 and Gln-142–Gln-155. Glycyl lysine isopeptide (Lys-Gly) (interchain with G-Cter in SUMO2) cross-links involve residues Lys-231 and Lys-238. A Phosphoserine; by PKA modification is found at Ser-293. An H-S-H (helix-span-helix), dimerization region spans residues Arg-334–Asp-464. The segment covering Leu-468–Lys-481 has biased composition (polar residues). The segment at Leu-468–Lys-491 is disordered. The span at Ser-482–Lys-491 shows a compositional bias: basic and acidic residues.

This sequence belongs to the AP-2 family. In terms of assembly, binds DNA as a dimer. Can form homodimers or heterodimers with other AP-2 family members. Interacts with WWOX. Interacts with CITED4. Interacts with UBE2I. Interacts with RALBP1 in a complex also containing EPN1 and NUMB during interphase and mitosis. Interacts with KCTD1; this interaction represses transcription activation. Interacts (via C-terminus) with CITED2 (via C-terminus); the interaction stimulates TFAP2A-transcriptional activation. Interacts (via N-terminus) with EP300 (via N-terminus); the interaction requires CITED2. Interacts with KCTD15; this interaction inhibits TFAP2A transcriptional activation.

The protein localises to the nucleus. In terms of biological role, sequence-specific DNA-binding protein that interacts with inducible viral and cellular enhancer elements to regulate transcription of selected genes. AP-2 factors bind to the consensus sequence 5'-GCCNNNGGC-3' and activate genes involved in a large spectrum of important biological functions including proper eye, face, body wall, limb and neural tube development. They also suppress a number of genes including MCAM/MUC18, C/EBP alpha and MYC. AP-2-alpha is the only AP-2 protein required for early morphogenesis of the lens vesicle. Together with the CITED2 coactivator, stimulates the PITX2 P1 promoter transcription activation. Associates with chromatin to the PITX2 P1 promoter region. This Ovis aries (Sheep) protein is Transcription factor AP-2-alpha (TFAP2A).